The primary structure comprises 345 residues: MTTQRLVSAAGQWDEEAIDRAIRPKRLEDYVGQRAMREQMAIFIQAALGRGEALDHVLIFGPPGLGKTTLANIIANELGVNVRHTSGPVLEKAGDLAALLTNLEPRDVLFIDEIHRLGAVVEEVLYPAMEDYQIDIMIGEGPAARSIKLDLPPFTLVGATTRAGLLTSPLRDRFGIVHRLEFYSVEELSRIVARSARILGSEITPEGAAEVARRSRGTPRIANRLLRRVRDFAQVMADGRITGEVAGKALEMLDVDPNGFDQSDRRLLLTMMEKFEGGPVGLDNLAAAIGEERGTIEDVLEPYLIQQGFIMRTPRGRVATRNAYLHFGLKPPQRTNVNEELFGDE.

Positions 1–183 (MTTQRLVSAA…FGIVHRLEFY (183 aa)) are large ATPase domain (RuvB-L). Residues I22, R23, G64, K67, T68, T69, 130–132 (EDY), R173, Y183, and R220 each bind ATP. T68 serves as a coordination point for Mg(2+). The interval 184 to 254 (SVEELSRIVA…VAGKALEMLD (71 aa)) is small ATPAse domain (RuvB-S). Residues 257–345 (PNGFDQSDRR…NVNEELFGDE (89 aa)) are head domain (RuvB-H). Positions 293, 312, and 317 each coordinate DNA.

The protein belongs to the RuvB family. As to quaternary structure, homohexamer. Forms an RuvA(8)-RuvB(12)-Holliday junction (HJ) complex. HJ DNA is sandwiched between 2 RuvA tetramers; dsDNA enters through RuvA and exits via RuvB. An RuvB hexamer assembles on each DNA strand where it exits the tetramer. Each RuvB hexamer is contacted by two RuvA subunits (via domain III) on 2 adjacent RuvB subunits; this complex drives branch migration. In the full resolvosome a probable DNA-RuvA(4)-RuvB(12)-RuvC(2) complex forms which resolves the HJ.

The protein localises to the cytoplasm. The catalysed reaction is ATP + H2O = ADP + phosphate + H(+). Functionally, the RuvA-RuvB-RuvC complex processes Holliday junction (HJ) DNA during genetic recombination and DNA repair, while the RuvA-RuvB complex plays an important role in the rescue of blocked DNA replication forks via replication fork reversal (RFR). RuvA specifically binds to HJ cruciform DNA, conferring on it an open structure. The RuvB hexamer acts as an ATP-dependent pump, pulling dsDNA into and through the RuvAB complex. RuvB forms 2 homohexamers on either side of HJ DNA bound by 1 or 2 RuvA tetramers; 4 subunits per hexamer contact DNA at a time. Coordinated motions by a converter formed by DNA-disengaged RuvB subunits stimulates ATP hydrolysis and nucleotide exchange. Immobilization of the converter enables RuvB to convert the ATP-contained energy into a lever motion, pulling 2 nucleotides of DNA out of the RuvA tetramer per ATP hydrolyzed, thus driving DNA branch migration. The RuvB motors rotate together with the DNA substrate, which together with the progressing nucleotide cycle form the mechanistic basis for DNA recombination by continuous HJ branch migration. Branch migration allows RuvC to scan DNA until it finds its consensus sequence, where it cleaves and resolves cruciform DNA. This is Holliday junction branch migration complex subunit RuvB from Methylococcus capsulatus (strain ATCC 33009 / NCIMB 11132 / Bath).